The chain runs to 356 residues: tRNA-specific 2-thiouridylase MnmA (356 aa).

ATP is bound by residues 6 to 13 (AMSGGVDS) and Leu-32. Cys-101 (nucleophile) is an active-site residue. A disulfide bridge links Cys-101 with Cys-193. ATP is bound at residue Gly-125. An interaction with tRNA region spans residues 143-145 (KDQ). The active-site Cysteine persulfide intermediate is Cys-193.

Belongs to the MnmA/TRMU family.

Its subcellular location is the cytoplasm. The enzyme catalyses S-sulfanyl-L-cysteinyl-[protein] + uridine(34) in tRNA + AH2 + ATP = 2-thiouridine(34) in tRNA + L-cysteinyl-[protein] + A + AMP + diphosphate + H(+). Its function is as follows. Catalyzes the 2-thiolation of uridine at the wobble position (U34) of tRNA, leading to the formation of s(2)U34. This Mycobacteroides abscessus (strain ATCC 19977 / DSM 44196 / CCUG 20993 / CIP 104536 / JCM 13569 / NCTC 13031 / TMC 1543 / L948) (Mycobacterium abscessus) protein is tRNA-specific 2-thiouridylase MnmA.